The following is a 460-amino-acid chain: Pentatricopeptide repeat-containing protein At5g43790 (460 aa).

9 PPR repeats span residues S70–F107, N111–F142, D149–P179, D180–P214, N215–L249, N250–R280, D281–P315, D316–P351, and K352–K382. A type E motif; degenerate region spans residues L387–N460.

This sequence belongs to the PPR family. PCMP-E subfamily.

This Arabidopsis thaliana (Mouse-ear cress) protein is Pentatricopeptide repeat-containing protein At5g43790 (PCMP-E30).